A 1875-amino-acid polypeptide reads, in one-letter code: Nonribosomal peptide synthetase otaB (1875 aa).

The adenylation 1 stretch occupies residues 202 to 590 (GQVRENGDRA…SIRFAGRRQA (389 aa)). The Carrier domain maps to 724–800 (SPMTAAERVM…DLVAHIKDAG (77 aa)). O-(pantetheine 4'-phosphoryl)serine is present on Ser761. The interval 836 to 1245 (EDVYPCTTLQ…LVSPLDEERL (410 aa)) is condensation. The segment at 1264–1659 (QKQSYAQPQA…ARKDTQVKIR (396 aa)) is adenylation 2.

It belongs to the NRP synthetase family.

The enzyme catalyses 7-carboxymellein + L-phenylalanine + ATP = ochratoxin B + ADP + phosphate + H(+). Its pathway is mycotoxin biosynthesis. Functionally, nonribosomal peptide synthetase; part of the gene cluster that mediates the biosynthesis of ochratoxin A (OTA), a mycotoxin composed of a chlorinated type I polyketide dihydroisocoumarin moiety linked to L-phenylalanine, and demonstrated to have nephrotoxic, immunotoxic, genotoxic, neurotoxic, and teratogenic properties. OtaB is responsible for the linking of phenylalanine to the dihydroisocoumarin ring. The pathway begins with the highly reducing polyketide synthase otaA that catalyzes the formation of the isocoumarin group during the initial stages of biosynthesis, starting from one acetate and 4 malonate units, to originate the characteristic pentaketide skeleton 7-methylmellein (7-MM) of the OTA molecule. The newly identified cyclase otaY might be involved in the polyketide cyclization reaction during the initial steps of the OTA biosynthesis. 7-MM is then oxidized into 7-carboxymellein (also called ochratoxin beta) by the cytochrome P450 monooxygenase otaC. The NRPS encoded by the otaB gene is involved in the linking of phenylalanine to the dihydroisocoumarin ring. The reaction catalyzed by NRPS results in the production of ochratoxin B (OTB), which is the non-chlorinated analog of OTA and which subsequently serves as the substrate of the halogenase otaD for chlorination activity to form the final molecular structure of OTA, containing a chlorine atom in the C-5 position of the molecule. This chain is Nonribosomal peptide synthetase otaB, found in Aspergillus carbonarius (strain ITEM 5010).